Consider the following 261-residue polypeptide: Imidazole glycerol phosphate synthase subunit HisF (261 aa).

Active-site residues include Asp-12 and Asp-131.

This sequence belongs to the HisA/HisF family. Heterodimer of HisH and HisF.

It is found in the cytoplasm. It carries out the reaction 5-[(5-phospho-1-deoxy-D-ribulos-1-ylimino)methylamino]-1-(5-phospho-beta-D-ribosyl)imidazole-4-carboxamide + L-glutamine = D-erythro-1-(imidazol-4-yl)glycerol 3-phosphate + 5-amino-1-(5-phospho-beta-D-ribosyl)imidazole-4-carboxamide + L-glutamate + H(+). It participates in amino-acid biosynthesis; L-histidine biosynthesis; L-histidine from 5-phospho-alpha-D-ribose 1-diphosphate: step 5/9. IGPS catalyzes the conversion of PRFAR and glutamine to IGP, AICAR and glutamate. The HisF subunit catalyzes the cyclization activity that produces IGP and AICAR from PRFAR using the ammonia provided by the HisH subunit. The sequence is that of Imidazole glycerol phosphate synthase subunit HisF from Brucella melitensis biotype 2 (strain ATCC 23457).